A 382-amino-acid polypeptide reads, in one-letter code: uncharacterized protein (382 aa).

Residues 1–21 (MKIILVVFVLIFVGVIGFNMI) traverse the membrane as a helical segment.

It belongs to the membrane fusion protein (MFP) (TC 8.A.1) family.

It is found in the membrane. This is an uncharacterized protein from Haemophilus influenzae (strain ATCC 51907 / DSM 11121 / KW20 / Rd).